Reading from the N-terminus, the 555-residue chain is Protein NRT1/ PTR FAMILY 5.12 (555 aa).

The next 2 helical transmembrane spans lie at 53–73 (FAYFGIASNLITYFTEALGES) and 83–103 (LWLGTAAFLPLIWGSIADSFL). Thr-108 carries the phosphothreonine modification. Helical transmembrane passes span 109–129 (ILLTSSFYIMGLGLLTFSATI), 148–168 (VIIFFCALYLIALGEGGFKVC), 190–210 (SYFNWLYFAISIGILTTRLVT), 221–241 (LGYAIPCLSMMLALFLFLLGI), 315–335 (AVLSLIPIWLCSLVFGIVFAQ), 357–377 (VPAATLQCFISLAILVFIPIY), 401–421 (ISTGIFLSIISMVIAALVEMK), 443–463 (VCWLIPQYILFGVSDVFTMVG), 482–502 (ALYLSIIGIGNFLSSFMVSVI), and 526–546 (YFYWLLACLSSLAFIFTVYFA).

This sequence belongs to the major facilitator superfamily. Proton-dependent oligopeptide transporter (POT/PTR) (TC 2.A.17) family. Expressed in shoots and roots.

It localises to the membrane. This Arabidopsis thaliana (Mouse-ear cress) protein is Protein NRT1/ PTR FAMILY 5.12 (NPF5.12).